The following is a 350-amino-acid chain: Glyceraldehyde-3-phosphate dehydrogenase (350 aa).

NAD(+)-binding positions include 13-14 (TI) and Gly118. 147–149 (SCN) contributes to the D-glyceraldehyde 3-phosphate binding site. Catalysis depends on Cys148, which acts as the Nucleophile. Arg176 serves as a coordination point for NAD(+). 202 to 203 (HG) provides a ligand contact to D-glyceraldehyde 3-phosphate. Residue Gln309 coordinates NAD(+). Residues 327 to 350 (LEEDPEASMDATDSALGVLNSPPL) are disordered.

The protein belongs to the glyceraldehyde-3-phosphate dehydrogenase family. As to quaternary structure, homotetramer.

Its subcellular location is the cytoplasm. The catalysed reaction is D-glyceraldehyde 3-phosphate + phosphate + NADP(+) = (2R)-3-phospho-glyceroyl phosphate + NADPH + H(+). The enzyme catalyses D-glyceraldehyde 3-phosphate + phosphate + NAD(+) = (2R)-3-phospho-glyceroyl phosphate + NADH + H(+). It participates in carbohydrate degradation; glycolysis; pyruvate from D-glyceraldehyde 3-phosphate: step 1/5. The polypeptide is Glyceraldehyde-3-phosphate dehydrogenase (Methanopyrus kandleri (strain AV19 / DSM 6324 / JCM 9639 / NBRC 100938)).